The following is a 316-amino-acid chain: Ribosomal RNA small subunit methyltransferase H (316 aa).

S-adenosyl-L-methionine is bound by residues 35 to 37 (AGH), Asp-55, Phe-84, Asp-105, and Gln-112.

It belongs to the methyltransferase superfamily. RsmH family.

The protein resides in the cytoplasm. It catalyses the reaction cytidine(1402) in 16S rRNA + S-adenosyl-L-methionine = N(4)-methylcytidine(1402) in 16S rRNA + S-adenosyl-L-homocysteine + H(+). Specifically methylates the N4 position of cytidine in position 1402 (C1402) of 16S rRNA. This chain is Ribosomal RNA small subunit methyltransferase H, found in Streptococcus pneumoniae (strain P1031).